The following is a 38-amino-acid chain: RapG inhibitor (38 aa).

A propeptide spanning residues 1–33 (MKRFLIGAGVAAVILSGWFIADHQTHSQEMKVA) is cleaved from the precursor.

The protein belongs to the Phr family. In terms of processing, contains a predicted signal peptide cleavage site in the N-terminal region, however the propeptide is probably subject to only one processing event, at the N-terminal end of the mature peptide.

The protein localises to the secreted. The protein resides in the cytoplasm. In terms of biological role, signaling molecule involved in the regulation of expression of DegU-controlled genes. Secreted during production, but the mature peptide acts intracellularly, indicating that it needs to be imported into the cell to function. Stimulates the DegU-dependent expression of aprE, an extracellular alkaline protease. Acts by inhibiting RapG activity. At high concentrations, represses the DegS-dependent aprE expression. The chain is RapG inhibitor (phrG) from Bacillus subtilis (strain 168).